We begin with the raw amino-acid sequence, 173 residues long: Disulfide bond formation protein B 2 (173 aa).

Over 1–9 (MSLAGSRLL) the chain is Cytoplasmic. A helical membrane pass occupies residues 10 to 26 (FSLVFLVGALASWAAFN). The Periplasmic segment spans residues 27–44 (LQTGGGLESCSLWSVQRL). A helical transmembrane segment spans residues 45-61 (LLLALGGVNLLAVIQGP). Topologically, residues 62–67 (GRVGRA) are cytoplasmic. The chain crosses the membrane as a helical span at residues 68-85 (VYWGLNLLLGLLGVVTAG). Residues 86–142 (RHVLLQNIPSEQLLACLPDMSFMLRQLSWWQALKLTFMGTSDCAEVTWTLLDMSLPE) lie on the Periplasmic side of the membrane. Cysteine 101 and cysteine 128 are disulfide-bonded. A helical transmembrane segment spans residues 143 to 161 (WSLLFFVIMLIFSGYRLWR). Residues 162-173 (QLRGARKAVALP) are Cytoplasmic-facing.

The protein belongs to the DsbB family.

It is found in the cell inner membrane. Functionally, required for disulfide bond formation in some periplasmic proteins. Acts by oxidizing the DsbA protein. The protein is Disulfide bond formation protein B 2 of Pseudomonas fluorescens (strain ATCC BAA-477 / NRRL B-23932 / Pf-5).